The following is a 150-amino-acid chain: Macrodomain Ter protein (150 aa).

Belongs to the MatP family. In terms of assembly, homodimer.

It localises to the cytoplasm. Required for spatial organization of the terminus region of the chromosome (Ter macrodomain) during the cell cycle. Prevents early segregation of duplicated Ter macrodomains during cell division. Binds specifically to matS, which is a 13 bp signature motif repeated within the Ter macrodomain. This Salmonella arizonae (strain ATCC BAA-731 / CDC346-86 / RSK2980) protein is Macrodomain Ter protein.